Reading from the N-terminus, the 361-residue chain is uncharacterized protein (361 aa).

The first 19 residues, 1–19 (MNLVICVLLLSIWKNNCMT), serve as a signal peptide directing secretion. The Extracellular portion of the chain corresponds to 20 to 47 (TNQTNGSSTTGDKPVESMQTKLNYLRRN). N-linked (GlcNAc...) asparagine glycosylation occurs at Asn24. A helical membrane pass occupies residues 48-68 (LLILVGIIIMVFVFICFCYLH). Over 69–361 (YNCLSDDASK…QVTSEVTLND (293 aa)) the chain is Cytoplasmic. Over residues 99-113 (AKTASQCSPETQPML) the composition is skewed to polar residues. Disordered stretches follow at residues 99–184 (AKTA…KAHK), 209–247 (PPQLFKPLYSSHPQNEISPSKPFGPQELAKPPKHFNPKR), and 295–316 (QNLHVSSKVKSSSRSFRKLDSR). Low complexity predominate over residues 114 to 133 (STADKSSDSSSPERASAQSS). A compositionally biased stretch (polar residues) spans 141–150 (SSLQKPSIPN). Low complexity predominate over residues 299 to 308 (VSSKVKSSSR).

Its subcellular location is the membrane. This is an uncharacterized protein from Homo sapiens (Human).